The following is a 361-amino-acid chain: tRNA/tmRNA (uracil-C(5))-methyltransferase (361 aa).

5 residues coordinate S-adenosyl-L-methionine: Q185, Y213, N218, E234, and D294. C319 (nucleophile) is an active-site residue. E353 functions as the Proton acceptor in the catalytic mechanism.

This sequence belongs to the class I-like SAM-binding methyltransferase superfamily. RNA M5U methyltransferase family. TrmA subfamily.

It catalyses the reaction uridine(54) in tRNA + S-adenosyl-L-methionine = 5-methyluridine(54) in tRNA + S-adenosyl-L-homocysteine + H(+). The enzyme catalyses uridine(341) in tmRNA + S-adenosyl-L-methionine = 5-methyluridine(341) in tmRNA + S-adenosyl-L-homocysteine + H(+). Functionally, dual-specificity methyltransferase that catalyzes the formation of 5-methyluridine at position 54 (m5U54) in all tRNAs, and that of position 341 (m5U341) in tmRNA (transfer-mRNA). The protein is tRNA/tmRNA (uracil-C(5))-methyltransferase of Pseudomonas putida (strain ATCC 700007 / DSM 6899 / JCM 31910 / BCRC 17059 / LMG 24140 / F1).